The primary structure comprises 225 residues: 7-cyano-7-deazaguanine synthase (225 aa).

Residue 10-20 participates in ATP binding; sequence FSGGQDSTTLA. Positions 190, 205, 208, and 211 each coordinate Zn(2+).

Belongs to the QueC family. Zn(2+) serves as cofactor.

The catalysed reaction is 7-carboxy-7-deazaguanine + NH4(+) + ATP = 7-cyano-7-deazaguanine + ADP + phosphate + H2O + H(+). It participates in purine metabolism; 7-cyano-7-deazaguanine biosynthesis. Its function is as follows. Catalyzes the ATP-dependent conversion of 7-carboxy-7-deazaguanine (CDG) to 7-cyano-7-deazaguanine (preQ(0)). This is 7-cyano-7-deazaguanine synthase from Helicobacter pylori (strain J99 / ATCC 700824) (Campylobacter pylori J99).